Consider the following 88-residue polypeptide: Small ribosomal subunit protein uS15 (88 aa).

The protein belongs to the universal ribosomal protein uS15 family. Part of the 30S ribosomal subunit. Forms a bridge to the 50S subunit in the 70S ribosome, contacting the 23S rRNA.

Its function is as follows. One of the primary rRNA binding proteins, it binds directly to 16S rRNA where it helps nucleate assembly of the platform of the 30S subunit by binding and bridging several RNA helices of the 16S rRNA. Forms an intersubunit bridge (bridge B4) with the 23S rRNA of the 50S subunit in the ribosome. The chain is Small ribosomal subunit protein uS15 from Francisella tularensis subsp. tularensis (strain FSC 198).